Reading from the N-terminus, the 121-residue chain is Ribonuclease P protein component (121 aa).

The protein belongs to the RnpA family. Consists of a catalytic RNA component (M1 or rnpB) and a protein subunit.

It catalyses the reaction Endonucleolytic cleavage of RNA, removing 5'-extranucleotides from tRNA precursor.. Its function is as follows. RNaseP catalyzes the removal of the 5'-leader sequence from pre-tRNA to produce the mature 5'-terminus. It can also cleave other RNA substrates such as 4.5S RNA. The protein component plays an auxiliary but essential role in vivo by binding to the 5'-leader sequence and broadening the substrate specificity of the ribozyme. This chain is Ribonuclease P protein component, found in Neisseria meningitidis serogroup B (strain ATCC BAA-335 / MC58).